Reading from the N-terminus, the 150-residue chain is Ribonuclease H (150 aa).

An RNase H type-1 domain is found at 1–142 (MSDSVELFTD…ADQLANRGVD (142 aa)). Asp10, Glu48, Asp70, and Asp134 together coordinate Mg(2+).

It belongs to the RNase H family. In terms of assembly, monomer. The cofactor is Mg(2+).

It is found in the cytoplasm. It carries out the reaction Endonucleolytic cleavage to 5'-phosphomonoester.. Functionally, endonuclease that specifically degrades the RNA of RNA-DNA hybrids. This chain is Ribonuclease H, found in Pseudomonas syringae pv. syringae (strain B728a).